Reading from the N-terminus, the 337-residue chain is Follistatin (337 aa).

A signal peptide spans 1–22 (PGGVCLLLLLLCQFMEDRSAQA). A TB domain is found at 23–96 (GNCWLRQAKN…TCENVDCGPG (74 aa)). 18 cysteine pairs are disulfide-bonded: C25–C48, C35–C81, C49–C84, C88–C99, C93–C109, C111–C143, C115–C136, C125–C157, C161–C172, C166–C182, C185–C218, C189–C211, C200–C232, C238–C249, C243–C260, C263–C295, C267–C288, and C277–C309. A Follistatin-like 1 domain is found at 87-110 (TCENVDCGPGKKCRMNKKNKPRCV). The Kazal-like 1 domain maps to 105–159 (NKPRCVCAPDCSNITWKGPVCGLDGKTYRNECALLKARCKEQPELEVQYQGKCKK). N-linked (GlcNAc...) asparagine glycosylation occurs at N117. Residues 160-183 (TCRDVFCPGSSTCVVDQTNNAYCV) enclose the Follistatin-like 2 domain. A Kazal-like 2 domain is found at 179–234 (NAYCVTCNRICPEPTSSEQYLCGNDGVTYPSACHLRKATCLLGRSIGLAYEGKCIK). The Follistatin-like 3 domain maps to 237 to 261 (SCEDIQCTGGKKCLWDFKVGRGRCS). In terms of domain architecture, Kazal-like 3 spans 254 to 311 (KVGRGRCSLCGELCPESKSEEPVCASDNATYASECAMKEAACSSGVLLEVKHSGSCNS). Residue N281 is glycosylated (N-linked (GlcNAc...) asparagine). A disordered region spans residues 309–337 (CNSISEDTEDEEEDEDQDYSFPISSILEW). Acidic residues predominate over residues 314–326 (EDTEDEEEDEDQD).

Monomer.

The protein resides in the secreted. In terms of biological role, binds directly to activin and functions as an activin antagonist. Specific inhibitor of the biosynthesis and secretion of pituitary follicle stimulating hormone (FSH). In Ovis aries (Sheep), this protein is Follistatin.